We begin with the raw amino-acid sequence, 1374 residues long: Mitogen-activated protein kinase kinase kinase 5 (1374 aa).

The tract at residues proline 68–glycine 87 is disordered. A compositionally biased stretch (low complexity) spans alanine 69–glycine 81. 2 positions are modified to asymmetric dimethylarginine; by PRMT1: arginine 78 and arginine 80. A Phosphoserine; by PIM1 and PKB/AKT1 modification is found at serine 83. Positions methionine 649–threonine 1374 are interaction with PPIA/CYPA. The 259-residue stretch at asparagine 680–leucine 938 folds into the Protein kinase domain. ATP-binding positions include leucine 686 to valine 694 and lysine 709. Tyrosine 718 is subject to Phosphotyrosine. Aspartate 803 functions as the Proton acceptor in the catalytic mechanism. A Phosphothreonine; by autocatalysis modification is found at threonine 813. Residue threonine 838 is modified to Phosphothreonine; by autocatalysis, MELK and MAP3K6. A Phosphothreonine; by autocatalysis modification is found at threonine 842. Position 958 is a phosphoserine (serine 958). Phosphoserine; by autocatalysis is present on serine 966. Phosphoserine occurs at positions 1029 and 1033. Residues serine 1182–arginine 1209 are disordered. Residues aspartate 1185–glutamate 1199 show a composition bias toward acidic residues. A coiled-coil region spans residues leucine 1245–lysine 1285.

Belongs to the protein kinase superfamily. STE Ser/Thr protein kinase family. MAP kinase kinase kinase subfamily. As to quaternary structure, homodimer when inactive. Binds both upstream activators and downstream substrates in multimolecular complexes. Part of a cytoplasmic complex made of HIPK1, DAB2IP and MAP3K5 in response to TNF. This complex formation promotes MAP3K5-JNK activation and subsequent apoptosis. Interacts with SOCS1 which recognizes phosphorylation of Tyr-718 and induces MAP3K5/ASK1 degradation in endothelial cells. Interacts with the 14-3-3 family proteins such as YWHAB, YWHAE, YWHAQ, YWHAH, YWHAZ and SFN. Interacts with ARRB2, BIRC2, DAB2IP, IGF1R, MAP3K6/ASK2, PGAM5, PIM1, PPP5C, SOCS1, STUB1, TRAF2, TRAF6 and TXN. Interacts with ERN1 in a TRAF2-dependent manner. Interacts with calcineurin subunit PPP3R1. Interacts with PPM1L. Interacts (via N-terminus) with RAF1 and this interaction inhibits the proapoptotic function of MAP3K5. Interacts with DAB2IP (via N-terminus C2 domain); the interaction occurs in a TNF-alpha-dependent manner. Interacts with DUSP13A; may positively regulate apoptosis. Interacts with DAXX. Interacts with RC3H2. Interacts with PPIA/CYPA. Interacts with PRMT1; the interaction results in MAP3K5 methylation by PRMT1 which inhibits MAP3K5 activation. Interacts with TRAF2; the interaction is inhibited by PRMT1. Interacts with TRIM48. (Microbial infection) Interacts with HIV-1 Nef; this interaction inhibits MAP3K5 signaling. Requires Mg(2+) as cofactor. Post-translationally, phosphorylated at Thr-838 through autophosphorylation and by MAP3K6/ASK2 which leads to activation. Thr-838 is dephosphorylated by PPP5C. Ser-83 and Ser-1033 are inactivating phosphorylation sites, the former of which is phosphorylated by AKT1. Phosphorylated at Ser-966 which induces association of MAP3K5/ASK1 with the 14-3-3 family proteins and suppresses MAP3K5/ASK1 activity. Calcineurin (CN) dephosphorylates this site. Also dephosphorylated and activated by PGAM5. Phosphorylation at Ser-966 in response to oxidative stress is negatively regulated by PPIA/CYPA. Ubiquitinated. Tumor necrosis factor (TNF) induces TNFR2-dependent ubiquitination, leading to proteasomal degradation. Ubiquitinated by RC3H2 in a TRIM48-dependent manner. In terms of processing, methylation at Arg-78 and Arg-80 by PRMT1 promotes association of MAP3K5 with thioredoxin and negatively regulates MAP3K5 association with TRAF2, inhibiting MAP3K5 activation. Methylation is blocked by ubiquitination of PRMT1 by TRIM48. Abundantly expressed in heart and pancreas.

Its subcellular location is the cytoplasm. The protein localises to the endoplasmic reticulum. The catalysed reaction is L-seryl-[protein] + ATP = O-phospho-L-seryl-[protein] + ADP + H(+). The enzyme catalyses L-threonyl-[protein] + ATP = O-phospho-L-threonyl-[protein] + ADP + H(+). Activated by various stressors, including oxidative stress, endoplasmic reticulum stress, and calcium overload, as well as by receptor-mediated inflammatory signals, such as the tumor necrosis factor (TNF) and lipopolysaccharide (LPS). Homophilic association of MAP3K5/ASK1 through the C-terminal coiled-coil domains and the heteromeric complex formation of MAP3K5/ASK1 with the reduced form of thioredoxin (TXN), constitutes an inactive form of the kinase. Upon ROS-induced dissociation of TXN from MAP3K5/ASK1, TRAF2 and TRAF6 are reciprocally recruited to MAP3K5/ASK1 and form the active MAP3K5/ASK1 signalosome, in which TRAF2 and TRAF6 appear to facilitate the active configuration of MAP3K5/ASK1. MAP3K5/ASK1 activity is also regulated through several phosphorylation and dephosphorylation events. Thr-838 is an activating phosphorylation site that is autophosphorylated and phosphorylated by MAP3K6/ASK2 and dephosphorylated by PPP5C. Ser-83 and Ser-1033 are inactivating phosphorylation sites, the former of which is phosphorylated by AKT1. Phosphorylation of Ser-966 induces association of MAP3K5/ASK1 with the 14-3-3 family proteins, which suppresses MAP3K5/ASK1 activity. Calcium/calmodulin-activated protein phosphatase calcineurin (PPP3CA) has been shown to directly dephosphorylate this site. SOCS1 binds to ASK1 by recognizing phosphorylation of Tyr-718 and induces MAP3K5/ASK1 degradation in endothelial cells. Also dephosphorylated and activated by PGAM5. Contains an N-terminal autoinhibitory domain. Once activated targeted for proteasomal degradation by RC3H2-mediated ubiquitination. In terms of biological role, serine/threonine kinase which acts as an essential component of the MAP kinase signal transduction pathway. Plays an important role in the cascades of cellular responses evoked by changes in the environment. Mediates signaling for determination of cell fate such as differentiation and survival. Plays a crucial role in the apoptosis signal transduction pathway through mitochondria-dependent caspase activation. MAP3K5/ASK1 is required for the innate immune response, which is essential for host defense against a wide range of pathogens. Mediates signal transduction of various stressors like oxidative stress as well as by receptor-mediated inflammatory signals, such as the tumor necrosis factor (TNF) or lipopolysaccharide (LPS). Once activated, acts as an upstream activator of the MKK/JNK signal transduction cascade and the p38 MAPK signal transduction cascade through the phosphorylation and activation of several MAP kinase kinases like MAP2K4/SEK1, MAP2K3/MKK3, MAP2K6/MKK6 and MAP2K7/MKK7. These MAP2Ks in turn activate p38 MAPKs and c-jun N-terminal kinases (JNKs). Both p38 MAPK and JNKs control the transcription factors activator protein-1 (AP-1). The sequence is that of Mitogen-activated protein kinase kinase kinase 5 (MAP3K5) from Homo sapiens (Human).